A 132-amino-acid polypeptide reads, in one-letter code: DNA-directed RNA polymerase subunit omega (132 aa).

The tract at residues 90–109 is disordered; it reads SSEAGGVLGTSSEEEGSSFD.

The protein belongs to the RNA polymerase subunit omega family. As to quaternary structure, the RNAP catalytic core consists of 2 alpha, 1 beta, 1 beta' and 1 omega subunit. When a sigma factor is associated with the core the holoenzyme is formed, which can initiate transcription.

It carries out the reaction RNA(n) + a ribonucleoside 5'-triphosphate = RNA(n+1) + diphosphate. Its function is as follows. Promotes RNA polymerase assembly. Latches the N- and C-terminal regions of the beta' subunit thereby facilitating its interaction with the beta and alpha subunits. The sequence is that of DNA-directed RNA polymerase subunit omega from Bartonella henselae (strain ATCC 49882 / DSM 28221 / CCUG 30454 / Houston 1) (Rochalimaea henselae).